Consider the following 82-residue polypeptide: Small ribosomal subunit protein bS16 (82 aa).

This sequence belongs to the bacterial ribosomal protein bS16 family.

In Bdellovibrio bacteriovorus (strain ATCC 15356 / DSM 50701 / NCIMB 9529 / HD100), this protein is Small ribosomal subunit protein bS16.